The sequence spans 738 residues: Vesicle-fusing ATPase (738 aa).

ATP-binding positions include 507–512 (NGIINY) and 547–554 (PGCGKSSL).

The protein belongs to the AAA ATPase family. In terms of assembly, interacts with syn7A, snpA and snpC. Mg(2+) is required as a cofactor.

The protein localises to the cytoplasmic vesicle membrane. It is found in the endosome membrane. The enzyme catalyses ATP + H2O = ADP + phosphate + H(+). In terms of biological role, required for vesicle-mediated transport. Involved in endocytosis and endosome-endosome fusion. May be required for transport from the endoplasmic reticulum to the Golgi stack, and for the fusion of transport vesicles within the Golgi cisternae. Required for cell polarity, locomotion and chemotaxis. The chain is Vesicle-fusing ATPase (nsfA) from Dictyostelium discoideum (Social amoeba).